Here is a 303-residue protein sequence, read N- to C-terminus: Ribosomal protein L11 methyltransferase (303 aa).

Positions 144, 165, 187, and 235 each coordinate S-adenosyl-L-methionine.

It belongs to the methyltransferase superfamily. PrmA family.

The protein localises to the cytoplasm. It carries out the reaction L-lysyl-[protein] + 3 S-adenosyl-L-methionine = N(6),N(6),N(6)-trimethyl-L-lysyl-[protein] + 3 S-adenosyl-L-homocysteine + 3 H(+). Its function is as follows. Methylates ribosomal protein L11. In Prochlorococcus marinus (strain AS9601), this protein is Ribosomal protein L11 methyltransferase.